The sequence spans 461 residues: Cysteine--tRNA ligase (461 aa).

Cys28 is a binding site for Zn(2+). The 'HIGH' region motif lies at 30–40 (ITVYDLCHIGH). Cys209, His234, and Glu238 together coordinate Zn(2+). Positions 266 to 270 (KMSKS) match the 'KMSKS' region motif. An ATP-binding site is contributed by Lys269.

This sequence belongs to the class-I aminoacyl-tRNA synthetase family. Monomer. Requires Zn(2+) as cofactor.

It localises to the cytoplasm. The enzyme catalyses tRNA(Cys) + L-cysteine + ATP = L-cysteinyl-tRNA(Cys) + AMP + diphosphate. This chain is Cysteine--tRNA ligase, found in Shigella flexneri.